Here is a 1098-residue protein sequence, read N- to C-terminus: Gramicidin S synthase 1 (1098 aa).

The 75-residue stretch at 538-612 (APRNEIEETL…QLVHYIKDSK (75 aa)) folds into the Carrier domain. O-(pantetheine 4'-phosphoryl)serine is present on Ser573.

Belongs to the ATP-dependent AMP-binding enzyme family. As to quaternary structure, large multienzyme complex of GrsA and GrsB. Pantetheine 4'-phosphate is required as a cofactor.

The enzyme catalyses L-phenylalanine + ATP + H2O = D-phenylalanine + AMP + diphosphate + H(+). It participates in antibiotic biosynthesis; gramicidin S biosynthesis. In terms of biological role, in the first step of peptide synthesis this enzyme activates phenylalanine and racemizes it to the D-isomer. The chain is Gramicidin S synthase 1 (grsA) from Brevibacillus brevis (Bacillus brevis).